Consider the following 250-residue polypeptide: Pre-protein VI (250 aa).

Residues 1-33 (MEDINFASLAPRHGSRPFMGNWQDIGTSNMSGG) constitute a propeptide that is removed on maturation. Residues 34–54 (AFSWGSLWSGIKNFGSTIKNY) are amphipathic alpha-helix essential for membrane lytic activity. Residues 36–53 (SWGSLWSGIKNFGSTIKN) form an involved in endosomal membrane lysis region. The interval 48-74 (GSTIKNYGSKAWNSSTGQMLRDKLKEQ) is interaction with hexon protein. The Nuclear export signal signature appears at 67–76 (LRDKLKEQNF). The disordered stretch occupies residues 103–147 (INSKLDPRPPVEEPPPAVETVSPEGRGEKRPRPDREETLVTQIDE). A Phosphoserine; by host modification is found at Ser124. Residues 127–140 (GRGEKRPRPDREET) are compositionally biased toward basic and acidic residues. The Nuclear localization signal signature appears at 131 to 135 (KRPRP). Residue Thr143 is modified to Phosphothreonine; by host. Positions 148 to 151 (PPSY) match the PPXY motif motif. Residues 206-220 (PSRASLRRAASGPRS) show a composition bias toward low complexity. Residues 206 to 226 (PSRASLRRAASGPRSMRPVAS) are disordered. Residues 231 to 242 (STLNSIVGLGVQ) carry the Nuclear export signal motif. An interaction with hexon protein region spans residues 233-239 (LNSIVGL). The interval 240 to 250 (GVQSLKRRRCF) is binds to importin alpha/beta, involved in hexon nuclear import. Positions 245–248 (KRRR) match the Nuclear localization signal motif.

It belongs to the adenoviridae protein VI family. Interacts with hexon protein; this interaction allows nuclear import of hexon trimers and possibly pre-capsid assembly. Interacts (via C-terminal NLS) with importin alpha/beta. In terms of assembly, interacts (via PPxY motif) with host NEDD4 ubiquitine ligase; this interaction might play a role in virus intracellular transport during entry. Part of a complex composed of the core-capsid bridging protein, the endosome lysis protein VI and the hexon-linking protein VIII; these interactions bridge the virus core to the capsid. Interacts with peripentonal hexons; this interaction stabilizes the capsid by gluing two peripentonal hexons together and joining them with an adjacent group-of-nine hexon. As to quaternary structure, heterodimer with the viral protease; disulfide-linked. Interacts with the viral protease. Post-translationally, ubiquitinated by Nedd4 following partial capsid disassembly; which might play a role in intracellular virus movement during entry. In terms of processing, contains the major nuclear import and export signals. Proteolytically removed during virion maturation. The processing of the C-terminus turns the precursor into a mature viral structural protein and abrogates its ability to promote hexon import and act as a potential chaperone protein.

Its subcellular location is the host nucleus. It is found in the host cytoplasm. The protein localises to the virion. Functionally, during virus assembly, promotes hexon trimers nuclear import through nuclear pore complexes via an importin alpha/beta-dependent mechanism. By analogy to herpesviruses capsid assembly, might act as a chaperone to promote the formation of the icosahedral capsid. In terms of biological role, structural component of the virion that provides increased stability to the particle shell through its interaction with the core-capsid bridging protein and the hexon-linking protein VIII. Fibers shedding during virus entry into host cell allows the endosome lysis protein to be exposed as a membrane-lytic peptide. Exhibits pH-independent membrane fragmentation activity and probably mediates viral rapid escape from host endosome via organellar membrane lysis. It is not clear if it then remains partially associated with the capsid and involved in the intracellular microtubule-dependent transport of capsid to the nucleus, or if it is lost during endosomal penetration. Cofactor that activates the viral protease. Binds to viral protease in a 1:1 ratio. The chain is Pre-protein VI from Human adenovirus C serotype 2 (HAdV-2).